We begin with the raw amino-acid sequence, 562 residues long: MGDISAATKAPAPPTPATPETNTTSSSSDTDVQHEPQIPSAASRNLVIFALGLAILVGVLDATIVATLVPTIADDFHSVDSSAWYGSAYLLVTGATQPIFGKIYSTFQSKLVFLSSVAILEVGSLVCALAKNSPTFIGGRAIAGLGAAGVISGGLIITALTTPLKQRPVYTAILGSLEGVGVIIGPIIGGQIASSIGWRWCFWINLPIGAVLCAILVFCLHPPKQTPEREQEQAGKTWTQKLAQLDLEGGLAIAGSITCLLLALEWGGTSYPWSDGRIIVLLVVFGVSLICVAVHQHWKGEAATFPTRLLKNRTFSMFLLCGLCFAGAQFTVLYYLPMWFQAVQGVSAAESGTRLLAMVVSVIVVSVIAGGSAGAVGYLPPFVFFATIFSSIGAGMLYTLHPSISKSKWIGYQILFGAGSGTGIQQAIVGVQVAVDHDDMAYATSAVMLVNTLAGSIFIAVSQTLFLGEMKRVTELIPNLDRHTLLSNFRSIRDKLDHQELDIAVNAYNRGITKAFLIGLVLCSITVLTWPLIRWIPLKKTEDPVKSERRNDPETLNAGNVA.

2 stretches are compositionally biased toward low complexity: residues 1–10 (MGDISAATKA) and 18–30 (TPET…SSDT). The disordered stretch occupies residues 1-36 (MGDISAATKAPAPPTPATPETNTTSSSSDTDVQHEP). N-linked (GlcNAc...) asparagine glycosylation occurs at asparagine 22. The next 8 helical transmembrane spans lie at 46 to 66 (LVIF…TIVA), 83 to 103 (AWYG…FGKI), 110 to 130 (KLVF…CALA), 141 to 161 (AIAG…TALT), 169 to 189 (VYTA…PIIG), 200 to 220 (WCFW…VFCL), 249 to 269 (GGLA…WGGT), and 278 to 298 (IIVL…HQHW). Asparagine 312 carries an N-linked (GlcNAc...) asparagine glycan. Helical transmembrane passes span 317–337 (MFLL…YYLP), 356–376 (LAMV…AGAV), 382–404 (FVFF…HPSI), 414–434 (ILFG…VQVA), 447–467 (VMLV…TLFL), and 516–536 (FLIG…IRWI).

It belongs to the major facilitator superfamily. TCR/Tet family.

The protein resides in the membrane. It participates in secondary metabolite biosynthesis. Functionally, efflux pump; part of the gene cluster that mediates the biosynthesis of the cyclic tetrapeptide apicidin F (APF). The protein is Efflux pump apf11 (apf11) of Gibberella fujikuroi (strain CBS 195.34 / IMI 58289 / NRRL A-6831) (Bakanae and foot rot disease fungus).